The chain runs to 490 residues: Glutamyl-tRNA(Gln) amidotransferase subunit A (490 aa).

Active-site charge relay system residues include Lys-76 and Ser-151. Ser-175 serves as the catalytic Acyl-ester intermediate.

This sequence belongs to the amidase family. GatA subfamily. In terms of assembly, heterotrimer of A, B and C subunits.

The catalysed reaction is L-glutamyl-tRNA(Gln) + L-glutamine + ATP + H2O = L-glutaminyl-tRNA(Gln) + L-glutamate + ADP + phosphate + H(+). Allows the formation of correctly charged Gln-tRNA(Gln) through the transamidation of misacylated Glu-tRNA(Gln) in organisms which lack glutaminyl-tRNA synthetase. The reaction takes place in the presence of glutamine and ATP through an activated gamma-phospho-Glu-tRNA(Gln). This is Glutamyl-tRNA(Gln) amidotransferase subunit A from Methylobacillus flagellatus (strain ATCC 51484 / DSM 6875 / VKM B-1610 / KT).